The following is a 361-amino-acid chain: uncharacterized protein (361 aa).

33-40 (GPINSGKT) serves as a coordination point for ATP.

This sequence belongs to the archaeal ATPase family.

This is an uncharacterized protein from Methanocaldococcus jannaschii (strain ATCC 43067 / DSM 2661 / JAL-1 / JCM 10045 / NBRC 100440) (Methanococcus jannaschii).